The sequence spans 851 residues: DEAD-box ATP-dependent RNA helicase 29 (851 aa).

The tract at residues 1–49 (MARLNPSKPSSRGGKPRSSSADAMAEHKPPPGRPKREGEGASKKKAKSG) is disordered. The segment covering 7–20 (SKPSSRGGKPRSSS) has biased composition (low complexity). Residues 24–42 (MAEHKPPPGRPKREGEGAS) are compositionally biased toward basic and acidic residues. The short motif at 49 to 77 (GGFESMGLCEEVYRGVRHKGYRVPTPIQR) is the Q motif element. In terms of domain architecture, Helicase ATP-binding spans 80–253 (MPLILAGHDI…KAGLRDPQIV (174 aa)). 93-100 (ARTGSGKT) contributes to the ATP binding site. The DEAD box motif lies at 201–204 (DEAD). Positions 277 to 426 (KLAALLYLVR…PAPTEEELLK (150 aa)) constitute a Helicase C-terminal domain. The disordered stretch occupies residues 702 to 851 (KWQQKTHRSI…KGKMKGKGTR (150 aa)). Residues 733–746 (RGNRKHTAAGRGRR) show a composition bias toward basic residues. Basic and acidic residues-rich tracts occupy residues 773-787 (DIAR…ESKF) and 796-825 (RHDG…DGNG). A compositionally biased stretch (basic residues) spans 841–851 (GKGKMKGKGTR).

The protein belongs to the DEAD box helicase family. DDX54/DBP10 subfamily.

The catalysed reaction is ATP + H2O = ADP + phosphate + H(+). The sequence is that of DEAD-box ATP-dependent RNA helicase 29 from Oryza sativa subsp. indica (Rice).